The chain runs to 1503 residues: E3 ubiquitin-protein ligase listerin (1503 aa).

HEAT repeat units follow at residues 52–89, 93–129, 133–170, 280–318, 323–345, 346–384, 552–589, 640–663, 664–700, 845–882, 1022–1065, 1078–1117, 1141–1183, and 1302–1340; these read SGID…ETSS, CYEH…KLEK, KGLK…ADKK, LNTP…SAQF, SLQN…HWRV, LQHF…NLPW, GDIV…TGGS, AENV…NEAE, KNVL…DFNS, LEKR…LDDS, TLFI…RMFR, RTLL…SLLE, AAAK…VMIS, and FKSI…KLLI. The RING-type zinc-finger motif lies at 1446-1499; the sequence is CTICMMTVHQQTNQLPKVKCKQCKNRFHSNCLVSSFHTYKWFESSNQSTCPLCR.

This sequence belongs to the LTN1 family. Component of the ribosome quality control complex (RQC), composed of at least the E3 ubiquitin ligase ltn1 and nemf. The complex probably also contains tcf25 as well as vcp/p97 and its ubiquitin-binding cofactors. RQC forms a stable complex with 60S ribosomal subunits.

The protein resides in the cytoplasm. It localises to the cytosol. The catalysed reaction is S-ubiquitinyl-[E2 ubiquitin-conjugating enzyme]-L-cysteine + [acceptor protein]-L-lysine = [E2 ubiquitin-conjugating enzyme]-L-cysteine + N(6)-ubiquitinyl-[acceptor protein]-L-lysine.. It participates in protein modification; protein ubiquitination. In terms of biological role, E3 ubiquitin-protein ligase. Component of the ribosome quality control complex (RQC), a ribosome-associated complex that mediates ubiquitination and extraction of incompletely synthesized nascent chains for proteasomal degradation. Ubiquitination leads to vcp/p97 recruitment for extraction and degradation of the incomplete translation product. The polypeptide is E3 ubiquitin-protein ligase listerin (Caenorhabditis briggsae).